The primary structure comprises 237 residues: Uridylate kinase (237 aa).

An ATP-binding site is contributed by 12–15; it reads KLSG. The involved in allosteric activation by GTP stretch occupies residues 20-25; it reads GENGFG. Gly-54 lines the UMP pocket. Gly-55 and Arg-59 together coordinate ATP. Residues Asp-72 and 133–140 contribute to the UMP site; that span reads TGNPYFST. 2 residues coordinate ATP: Tyr-166 and Asp-169.

It belongs to the UMP kinase family. Homohexamer.

It localises to the cytoplasm. It carries out the reaction UMP + ATP = UDP + ADP. The protein operates within pyrimidine metabolism; CTP biosynthesis via de novo pathway; UDP from UMP (UMPK route): step 1/1. With respect to regulation, allosterically activated by GTP. Inhibited by UTP. Functionally, catalyzes the reversible phosphorylation of UMP to UDP. In Clostridium perfringens (strain ATCC 13124 / DSM 756 / JCM 1290 / NCIMB 6125 / NCTC 8237 / Type A), this protein is Uridylate kinase.